A 556-amino-acid polypeptide reads, in one-letter code: Formate--tetrahydrofolate ligase (556 aa).

65 to 72 (TPAGEGKS) lines the ATP pocket.

Belongs to the formate--tetrahydrofolate ligase family.

It carries out the reaction (6S)-5,6,7,8-tetrahydrofolate + formate + ATP = (6R)-10-formyltetrahydrofolate + ADP + phosphate. It participates in one-carbon metabolism; tetrahydrofolate interconversion. The sequence is that of Formate--tetrahydrofolate ligase from Clostridium beijerinckii (strain ATCC 51743 / NCIMB 8052) (Clostridium acetobutylicum).